The chain runs to 264 residues: Type II iodothyronine deiodinase (264 aa).

Topologically, residues methionine 1 to aspartate 7 are lumenal. Residues leucine 8–tyrosine 28 traverse the membrane as a helical; Signal-anchor for type III membrane protein segment. The Cytoplasmic portion of the chain corresponds to aspartate 29–lysine 264. The active site involves selenocysteine 124. Position 124 (selenocysteine 124) is a non-standard amino acid, selenocysteine.

The protein belongs to the iodothyronine deiodinase family. Predominantly monomer. Can form homodimers but homodimerization is not essential for enzyme activity. High levels seen in the metamorphosing tail.

The protein localises to the endoplasmic reticulum membrane. The catalysed reaction is 3,3',5-triiodo-L-thyronine + iodide + A + H(+) = L-thyroxine + AH2. It carries out the reaction 3,3'-diiodo-L-thyronine + iodide + A + H(+) = 3,3',5'-triiodo-L-thyronine + AH2. The enzyme catalyses 3'-iodo-L-thyronine + iodide + A + H(+) = 3',5'-diiodo-L-thyronine + AH2. It catalyses the reaction 3,3'-diiodothyronamine + iodide + A + H(+) = 3,3',5'-triiodothyronamine + AH2. The catalysed reaction is 3'-iodothyronamine + iodide + A + H(+) = 3',5'-diiodothyronamine + AH2. Its activity is regulated as follows. Not inhibited by N(6)-propylthiouracil. Functionally, plays a crucial role in the metabolism of thyroid hormones (TH) and has specific roles in TH activation and inactivation by deiodination. Catalyzes the deiodination of L-thyroxine (T4) to 3,5,3'-triiodothyronine (T3) and 3',5'-diiodothyronine (3',5'-T2) to 3'-monoiodothyronine (3'-T1) via outer-ring deiodination (ORD). Catalyzes the deiodination of 3,3',5'-triiodothyronine (rT3) to 3,3'-diiodothyronine (3,3'-T2) via ORD. Catalyzes the phenolic ring deiodinations of 3,3',5'-triiodothyronamine and 3',5'- diiodothyronamine. The sequence is that of Type II iodothyronine deiodinase (dio2) from Aquarana catesbeiana (American bullfrog).